Here is a 385-residue protein sequence, read N- to C-terminus: Transcription factor TGAL3 (385 aa).

The segment at 62 to 113 (LHALVGGGDGGDDAGEQRGADSSAVSKERRGDQKMQRRLAQNREAARKSRMR) is disordered. The span at 87 to 96 (SKERRGDQKM) shows a compositional bias: basic and acidic residues. In terms of domain architecture, bZIP spans 93–137 (DQKMQRRLAQNREAARKSRMRKKAYIQQLESSRSKLMHLEQELQR). The segment at 95-115 (KMQRRLAQNREAARKSRMRKK) is basic motif. The leucine-zipper stretch occupies residues 121-135 (LESSRSKLMHLEQEL). One can recognise a DOG1 domain in the interval 162 to 382 (TLAFDLEYAR…RALSSLWLAR (221 aa)).

It belongs to the bZIP family. Interacts with NPR1/NH1, NPR2/NH2 and NPR3/NH3.

Its subcellular location is the nucleus. Functionally, transcriptional regulator involved in defense response. The chain is Transcription factor TGAL3 from Oryza sativa subsp. japonica (Rice).